The chain runs to 134 residues: Beta-synuclein (134 aa).

Repeat copies occupy residues 20-30 (EKTKQGVTEAA) and 31-41 (EKTKEGVLYVG). A 4 X 11 AA tandem repeats of [EGS]-K-T-K-[EQ]-[GQ]-V-X(4) region spans residues 20–67 (EKTKQGVTEAAEKTKEGVLYVGSKTREGVVQGVASVAEKTKEQASHLG). One copy of the 3; approximate repeat lies at 42-56 (SKTREGVVQGVASVA). Repeat 4 spans residues 57 to 67 (EKTKEQASHLG). The segment at 89 to 134 (FPTDLKPEEVAQEAAEEPLIEPLMEPEGESYEDPPQEEYQEYEPEA) is disordered. Over residues 98–134 (VAQEAAEEPLIEPLMEPEGESYEDPPQEEYQEYEPEA) the composition is skewed to acidic residues. Ser118 is subject to Phosphoserine; by BARK1, CK2 and GRK5.

This sequence belongs to the synuclein family. Post-translationally, phosphorylated. Phosphorylation by G-protein coupled receptor kinases (GRK) is more efficient than phosphorylation by CK1, CK2 and CaM-kinase II. As to expression, expressed predominantly in brain; concentrated in presynaptic nerve terminals.

The protein localises to the cytoplasm. Non-amyloid component of senile plaques found in Alzheimer disease. Could act as a regulator of SNCA aggregation process. Protects neurons from staurosporine and 6-hydroxy dopamine (6OHDA)-stimulated caspase activation in a p53/TP53-dependent manner. Contributes to restore the SNCA anti-apoptotic function abolished by 6OHDA. Not found in the Lewy bodies associated with Parkinson disease. This is Beta-synuclein (SNCB) from Homo sapiens (Human).